The sequence spans 210 residues: Large ribosomal subunit protein uL4 (210 aa).

Residues glutamine 46–glycine 85 form a disordered region. Basic residues predominate over residues glycine 60 to glycine 71.

Belongs to the universal ribosomal protein uL4 family. As to quaternary structure, part of the 50S ribosomal subunit.

Its function is as follows. One of the primary rRNA binding proteins, this protein initially binds near the 5'-end of the 23S rRNA. It is important during the early stages of 50S assembly. It makes multiple contacts with different domains of the 23S rRNA in the assembled 50S subunit and ribosome. Functionally, forms part of the polypeptide exit tunnel. This chain is Large ribosomal subunit protein uL4, found in Prochlorococcus marinus (strain AS9601).